Reading from the N-terminus, the 150-residue chain is Ribosomal RNA large subunit methyltransferase H (150 aa).

Residues A100 and 118-123 (LSEMTF) contribute to the S-adenosyl-L-methionine site.

Belongs to the RNA methyltransferase RlmH family. As to quaternary structure, homodimer.

It localises to the cytoplasm. The enzyme catalyses pseudouridine(1915) in 23S rRNA + S-adenosyl-L-methionine = N(3)-methylpseudouridine(1915) in 23S rRNA + S-adenosyl-L-homocysteine + H(+). Functionally, specifically methylates the pseudouridine at position 1915 (m3Psi1915) in 23S rRNA. This chain is Ribosomal RNA large subunit methyltransferase H, found in Helicobacter pylori (strain HPAG1).